Consider the following 222-residue polypeptide: Prolactin-3B1 (222 aa).

An N-terminal signal peptide occupies residues 1-31 (MKLSLSQPCSFSGALLLLAVSNLLVWEKVTS). Intrachain disulfides connect Cys82–Cys197 and Cys214–Cys222.

This sequence belongs to the somatotropin/prolactin family.

The protein resides in the secreted. In Mus musculus (Mouse), this protein is Prolactin-3B1 (Prl3b1).